We begin with the raw amino-acid sequence, 397 residues long: uncharacterized protein (397 aa).

This is an uncharacterized protein from Methanocaldococcus jannaschii (strain ATCC 43067 / DSM 2661 / JAL-1 / JCM 10045 / NBRC 100440) (Methanococcus jannaschii).